A 408-amino-acid polypeptide reads, in one-letter code: RNA exonuclease 4 (408 aa).

Positions 27–70 (TKEKDVSNSKAHNSRSSQSPSSSLRSSSRIQRKSKHSQGVGQYM) are disordered. Low complexity predominate over residues 40 to 55 (SRSSQSPSSSLRSSSR). Residues 131–292 (QYLAIDCEMV…YRLHKKEWER (162 aa)) form the Exonuclease domain. Over residues 310–322 (PEHVLGKRGHDEK) the composition is skewed to basic and acidic residues. The tract at residues 310-408 (PEHVLGKRGH…GESWWEQPAA (99 aa)) is disordered. The span at 343–357 (GNGGGRQQFPGGGRK) shows a compositional bias: gly residues. Positions 372-384 (QRVDENGRGDGTS) are enriched in basic and acidic residues.

Belongs to the REXO4 family.

Its subcellular location is the nucleus. In terms of biological role, exoribonuclease involved in ribosome biosynthesis. Involved in the processing of ITS1, the internal transcribed spacer localized between the 18S and 5.8S rRNAs. This Cryptococcus neoformans var. neoformans serotype D (strain B-3501A) (Filobasidiella neoformans) protein is RNA exonuclease 4 (REX4).